The following is a 256-amino-acid chain: tRNA pseudouridine synthase A (256 aa).

D52 acts as the Nucleophile in catalysis. Residue Y111 coordinates substrate.

Belongs to the tRNA pseudouridine synthase TruA family. As to quaternary structure, homodimer.

The enzyme catalyses uridine(38/39/40) in tRNA = pseudouridine(38/39/40) in tRNA. Its function is as follows. Formation of pseudouridine at positions 38, 39 and 40 in the anticodon stem and loop of transfer RNAs. The polypeptide is tRNA pseudouridine synthase A (Paramagnetospirillum magneticum (strain ATCC 700264 / AMB-1) (Magnetospirillum magneticum)).